The chain runs to 276 residues: Large ribosomal subunit protein uL2 (276 aa).

The interval 225–276 (VMNPVDHPHGGGEGKTAAGRDPVSPWGTPTKGYRTRSNKRTDSMIVQKRHKR) is disordered.

This sequence belongs to the universal ribosomal protein uL2 family. In terms of assembly, part of the 50S ribosomal subunit. Forms a bridge to the 30S subunit in the 70S ribosome.

In terms of biological role, one of the primary rRNA binding proteins. Required for association of the 30S and 50S subunits to form the 70S ribosome, for tRNA binding and peptide bond formation. It has been suggested to have peptidyltransferase activity; this is somewhat controversial. Makes several contacts with the 16S rRNA in the 70S ribosome. This Cupriavidus taiwanensis (strain DSM 17343 / BCRC 17206 / CCUG 44338 / CIP 107171 / LMG 19424 / R1) (Ralstonia taiwanensis (strain LMG 19424)) protein is Large ribosomal subunit protein uL2.